Reading from the N-terminus, the 780-residue chain is Endonuclease MutS2 (780 aa).

ATP is bound at residue 334 to 341 (GPNAGGKT). Residues 706–780 (IDIRGMRSVD…GGSGKTIVEI (75 aa)) enclose the Smr domain.

Belongs to the DNA mismatch repair MutS family. MutS2 subfamily. As to quaternary structure, homodimer. Binds to stalled ribosomes, contacting rRNA.

Endonuclease that is involved in the suppression of homologous recombination and thus may have a key role in the control of bacterial genetic diversity. Functionally, acts as a ribosome collision sensor, splitting the ribosome into its 2 subunits. Detects stalled/collided 70S ribosomes which it binds and splits by an ATP-hydrolysis driven conformational change. Acts upstream of the ribosome quality control system (RQC), a ribosome-associated complex that mediates the extraction of incompletely synthesized nascent chains from stalled ribosomes and their subsequent degradation. Probably generates substrates for RQC. The sequence is that of Endonuclease MutS2 from Borreliella burgdorferi (strain ATCC 35210 / DSM 4680 / CIP 102532 / B31) (Borrelia burgdorferi).